A 125-amino-acid chain; its full sequence is Putative glutaredoxin-C2 (125 aa).

Residues 2 to 103 enclose the Glutaredoxin domain; sequence AERVARLSSQ…PLLREAGALW (102 aa). Cysteines 22 and 25 form a disulfide.

Belongs to the glutaredoxin family. CC-type subfamily.

It is found in the cytoplasm. Has a glutathione-disulfide oxidoreductase activity in the presence of NADPH and glutathione reductase. Reduces low molecular weight disulfides and proteins. The sequence is that of Putative glutaredoxin-C2 (GRXC2) from Oryza sativa subsp. japonica (Rice).